The sequence spans 71 residues: Ceratotoxin-A (71 aa).

Residues 1–23 (MANLKAVFLICIVAFIAFQCVVA) form the signal peptide. 2 consecutive propeptides follow at residues 24–35 (EPAAEDSIVVKR) and 65–71 (VAAGLVG).

Homomer of four to six subunits.

It localises to the secreted. Functionally, female-specific peptides with potent activity against Gram-positive and Gram-negative bacteria. They have as well hemolytic activity. This chain is Ceratotoxin-A (CTXA2), found in Ceratitis capitata (Mediterranean fruit fly).